Reading from the N-terminus, the 482-residue chain is Glycogen synthase (482 aa).

K18 is an ADP-alpha-D-glucose binding site.

The protein belongs to the glycosyltransferase 1 family. Bacterial/plant glycogen synthase subfamily.

It carries out the reaction [(1-&gt;4)-alpha-D-glucosyl](n) + ADP-alpha-D-glucose = [(1-&gt;4)-alpha-D-glucosyl](n+1) + ADP + H(+). It participates in glycan biosynthesis; glycogen biosynthesis. Functionally, synthesizes alpha-1,4-glucan chains using ADP-glucose. The sequence is that of Glycogen synthase from Rhodopseudomonas palustris (strain HaA2).